The sequence spans 107 residues: Wound-induced proteinase inhibitor 1 (107 aa).

Positions 1–23 (MESKFAHIIVFFLLATSFETLLA) are cleaved as a signal peptide. The propeptide occupies 24-36 (RKESDGPEVIELQ).

Belongs to the protease inhibitor I13 (potato type I serine protease inhibitor) family. As to quaternary structure, heterogeneous tetramers of similar chains.

Its function is as follows. Inhibits both chymotrypsin and trypsin. In Solanum tuberosum (Potato), this protein is Wound-induced proteinase inhibitor 1.